Here is a 237-residue protein sequence, read N- to C-terminus: tRNA1(Val) (adenine(37)-N6)-methyltransferase (237 aa).

Belongs to the methyltransferase superfamily. tRNA (adenine-N(6)-)-methyltransferase family.

The protein resides in the cytoplasm. The enzyme catalyses adenosine(37) in tRNA1(Val) + S-adenosyl-L-methionine = N(6)-methyladenosine(37) in tRNA1(Val) + S-adenosyl-L-homocysteine + H(+). Functionally, specifically methylates the adenine in position 37 of tRNA(1)(Val) (anticodon cmo5UAC). In Tolumonas auensis (strain DSM 9187 / NBRC 110442 / TA 4), this protein is tRNA1(Val) (adenine(37)-N6)-methyltransferase.